The chain runs to 568 residues: Potassium-transporting ATPase potassium-binding subunit (568 aa).

Helical transmembrane passes span 1-21 (MWLT…LAVP), 60-80 (GLAL…LLRA), 129-149 (AITF…AGFI), 174-194 (VMLP…VPQA), 251-271 (IHIL…GSML), 278-298 (WVLF…VFTA), 381-401 (VGLI…GMMI), 420-440 (VMLA…LAAV), 488-508 (IGLA…ALAG), and 528-548 (PLFM…TFLP).

It belongs to the KdpA family. In terms of assembly, the system is composed of three essential subunits: KdpA, KdpB and KdpC.

The protein localises to the cell inner membrane. Functionally, part of the high-affinity ATP-driven potassium transport (or Kdp) system, which catalyzes the hydrolysis of ATP coupled with the electrogenic transport of potassium into the cytoplasm. This subunit binds the periplasmic potassium ions and delivers the ions to the membrane domain of KdpB through an intramembrane tunnel. In Delftia acidovorans (strain DSM 14801 / SPH-1), this protein is Potassium-transporting ATPase potassium-binding subunit.